Here is a 567-residue protein sequence, read N- to C-terminus: Hydrogenase-2 large chain (567 aa).

Ni(2+) is bound by residues Cys-61, Cys-64, Cys-546, and Cys-549. Residues 553 to 567 (VVDADGNEVVSVKVL) constitute a propeptide that is removed on maturation.

It belongs to the [NiFe]/[NiFeSe] hydrogenase large subunit family. Heterodimer of a large and a small subunit. Requires Ni(2+) as cofactor.

Its subcellular location is the cell membrane. The enzyme catalyses H2 + A = AH2. Functionally, this is one of three E.coli hydrogenases synthesized in response to different physiological conditions. HYD2 is involved in hydrogen uptake. The chain is Hydrogenase-2 large chain (hybC) from Escherichia coli O157:H7.